The following is a 109-amino-acid chain: Antifungal protein ginkbilobin-like protein (109 aa).

The Gnk2-homologous domain maps to 4 to 109 (TNFVSSACNT…CFIQYEQHSF (106 aa)). Disulfide bonds link cysteine 11-cysteine 87, cysteine 63-cysteine 72, and cysteine 75-cysteine 100. Alpha-D-mannopyranose is bound at residue asparagine 12. The alpha-D-mannopyranose site is built by arginine 94 and glutamate 105.

Functionally, exerts antifungal activity through its carbohydrate-binding specificity. The polypeptide is Antifungal protein ginkbilobin-like protein (Picea abies (Norway spruce)).